Reading from the N-terminus, the 511-residue chain is MRWISRPGWPGHLLALAAGALTPLALAPFDYWPLAILSIALLYLGLRGLPGKSALWRGWWYGFGAFGAGTSWIYVSIHDYGAASVPLASLLMLGFTAGVAFFFALPAWLWARCLRRDNAPLGDALAFAALWLALELFRSWFLTGFPWLYAGYSQLQGPLAGLVPVGGVWLSSFVIALSAALLVNLPRLFPHGASLLLGLVLLLGPWAAGLYLKGHAWTHSAGEPLRVVAIQGNIAQELKWDPNQVRAQLDLYRDLSLPQQDVDLIVWPETAVPILQDMASGYLGAMGQVADEKNAALITGVPVRERLADGKSRYFNGITVVGEGAGTYLKQKLVPFGEYVPLQDLLRGLIAFFDLPMSDFARGPADQPLLKAKGYQIAPYICYEVVYPEFAAALAAQSQVLLTVSNDTWFGTSIGPLQHLQMAQMRALESGRWMIRATNNGVTGLIDPYGRIVRQIPQFQQGILRGEVIPMQGLTPYLQYRVWPLAGLAGVLLLWALLGRQLRPQERRLFG.

The next 6 membrane-spanning stretches (helical) occupy residues 7–29, 58–78, 90–110, 125–145, 163–183, and 192–212; these read PGWPGHLLALAAGALTPLALAPF, GWWYGFGAFGAGTSWIYVSIH, LLMLGFTAGVAFFFALPAWLW, LAFAALWLALELFRSWFLTGF, VPVGGVWLSSFVIALSAALLV, and GASLLLGLVLLLGPWAAGLYL. Positions 230–470 constitute a CN hydrolase domain; the sequence is IQGNIAQELK…QGILRGEVIP (241 aa). Glu-269 functions as the Proton acceptor in the catalytic mechanism. The active site involves Lys-330. The Nucleophile role is filled by Cys-382. The chain crosses the membrane as a helical span at residues 482–502; the sequence is VWPLAGLAGVLLLWALLGRQL.

This sequence belongs to the CN hydrolase family. Apolipoprotein N-acyltransferase subfamily.

It localises to the cell inner membrane. It carries out the reaction N-terminal S-1,2-diacyl-sn-glyceryl-L-cysteinyl-[lipoprotein] + a glycerophospholipid = N-acyl-S-1,2-diacyl-sn-glyceryl-L-cysteinyl-[lipoprotein] + a 2-acyl-sn-glycero-3-phospholipid + H(+). Its pathway is protein modification; lipoprotein biosynthesis (N-acyl transfer). Catalyzes the phospholipid dependent N-acylation of the N-terminal cysteine of apolipoprotein, the last step in lipoprotein maturation. This Pseudomonas aeruginosa (strain ATCC 15692 / DSM 22644 / CIP 104116 / JCM 14847 / LMG 12228 / 1C / PRS 101 / PAO1) protein is Apolipoprotein N-acyltransferase.